A 415-amino-acid polypeptide reads, in one-letter code: DNA double-strand break repair protein Mre11 (415 aa).

Mn(2+) is bound by residues Asp10, His12, Asp51, and Asn86. His87 functions as the Proton donor in the catalytic mechanism. Mn(2+)-binding residues include His174, His208, and His210.

This sequence belongs to the MRE11/RAD32 family. In terms of assembly, homodimer. Forms a heterotetramer composed of two Mre11 subunits and two Rad50 subunits. It depends on Mn(2+) as a cofactor.

Nuclease activity is regulated by Rad50. Functionally, part of the Rad50/Mre11 complex, which is involved in the early steps of DNA double-strand break (DSB) repair. The complex may facilitate opening of the processed DNA ends to aid in the recruitment of HerA and NurA. Mre11 binds to DSB ends and has both double-stranded 3'-5' exonuclease activity and single-stranded endonuclease activity. This is DNA double-strand break repair protein Mre11 from Pyrococcus abyssi (strain GE5 / Orsay).